The chain runs to 475 residues: Ribulose bisphosphate carboxylase large chain (475 aa).

Residues 1–2 (MS) constitute a propeptide that is removed on maturation. Position 3 is an N-acetylproline (proline 3). The residue at position 14 (lysine 14) is an N6,N6,N6-trimethyllysine. Positions 123 and 173 each coordinate substrate. The active-site Proton acceptor is the lysine 175. Residue lysine 177 participates in substrate binding. Residues lysine 201, aspartate 203, and glutamate 204 each contribute to the Mg(2+) site. An N6-carboxylysine modification is found at lysine 201. Histidine 294 (proton acceptor) is an active-site residue. Positions 295, 327, and 379 each coordinate substrate.

This sequence belongs to the RuBisCO large chain family. Type I subfamily. In terms of assembly, heterohexadecamer of 8 large chains and 8 small chains. Mg(2+) serves as cofactor.

It is found in the plastid. Its subcellular location is the chloroplast. It carries out the reaction 2 (2R)-3-phosphoglycerate + 2 H(+) = D-ribulose 1,5-bisphosphate + CO2 + H2O. The enzyme catalyses D-ribulose 1,5-bisphosphate + O2 = 2-phosphoglycolate + (2R)-3-phosphoglycerate + 2 H(+). Its function is as follows. RuBisCO catalyzes two reactions: the carboxylation of D-ribulose 1,5-bisphosphate, the primary event in carbon dioxide fixation, as well as the oxidative fragmentation of the pentose substrate in the photorespiration process. Both reactions occur simultaneously and in competition at the same active site. The polypeptide is Ribulose bisphosphate carboxylase large chain (Nymphaea alba (White water-lily)).